We begin with the raw amino-acid sequence, 2053 residues long: Integrator complex subunit 1 (2053 aa).

Disordered stretches follow at residues 36–58 (KILP…ALAS) and 249–285 (SLPS…ESEP). Residues 268–283 (DNSTQSLDASPLNTES) show a composition bias toward polar residues. The chain crosses the membrane as a helical span at residues 708–728 (LAIIAFYWKAWLILLMISAHN).

Belongs to the Integrator subunit 1 family. As to quaternary structure, belongs to the multiprotein complex Integrator, at least composed of IntS1, IntS2, IntS3, IntS4, omd/IntS5, IntS6, defl/IntS7, IntS8, IntS9, IntS10, IntS11, IntS12, asun/IntS13, IntS14 and IntS15. The core complex associates with protein phosphatase 2A subunits mts/PP2A and Pp2A-29B, to form the Integrator-PP2A (INTAC) complex. Within the complex, interacts with IntS12 and IntS9. Interaction with IntS12 is likely to be important for promoting 3'-end processing of snRNAs. Interacts with Mediator complex members Cdk8 and CycC.

The protein resides in the nucleus membrane. Its subcellular location is the nucleus. In terms of biological role, component of the integrator complex, a multiprotein complex that terminates RNA polymerase II (Pol II) transcription in the promoter-proximal region of genes. The integrator complex provides a quality checkpoint during transcription elongation by driving premature transcription termination of transcripts that are unfavorably configured for transcriptional elongation: the complex terminates transcription by (1) catalyzing dephosphorylation of the C-terminal domain (CTD) of Pol II subunit Polr2A/Rbp1 and Spt5, and (2) degrading the exiting nascent RNA transcript via endonuclease activity. The integrator complex is also involved in the 3'-end processing of the U7 snRNA, and also the spliceosomal snRNAs U1, U2, U4 and U5. Required for the normal expression of the Integrator complex component IntS12. The sequence is that of Integrator complex subunit 1 from Drosophila melanogaster (Fruit fly).